Reading from the N-terminus, the 264-residue chain is Thymidylate synthase (264 aa).

Arg21 contributes to the dUMP binding site. (6R)-5,10-methylene-5,6,7,8-tetrahydrofolate is bound at residue His51. 126-127 (RR) is a binding site for dUMP. Residue Cys146 is the Nucleophile of the active site. DUMP contacts are provided by residues 166-169 (RSCD), Asn177, and 207-209 (HLY). Asp169 is a binding site for (6R)-5,10-methylene-5,6,7,8-tetrahydrofolate. A (6R)-5,10-methylene-5,6,7,8-tetrahydrofolate-binding site is contributed by Ala263.

It belongs to the thymidylate synthase family. Bacterial-type ThyA subfamily. Homodimer.

The protein localises to the cytoplasm. The enzyme catalyses dUMP + (6R)-5,10-methylene-5,6,7,8-tetrahydrofolate = 7,8-dihydrofolate + dTMP. It participates in pyrimidine metabolism; dTTP biosynthesis. Its function is as follows. Catalyzes the reductive methylation of 2'-deoxyuridine-5'-monophosphate (dUMP) to 2'-deoxythymidine-5'-monophosphate (dTMP) while utilizing 5,10-methylenetetrahydrofolate (mTHF) as the methyl donor and reductant in the reaction, yielding dihydrofolate (DHF) as a by-product. This enzymatic reaction provides an intracellular de novo source of dTMP, an essential precursor for DNA biosynthesis. This chain is Thymidylate synthase, found in Shewanella oneidensis (strain ATCC 700550 / JCM 31522 / CIP 106686 / LMG 19005 / NCIMB 14063 / MR-1).